We begin with the raw amino-acid sequence, 168 residues long: ATP synthase subunit b (168 aa).

Residues 9–29 (AIPFGTIAYTLFIFLILLVML) traverse the membrane as a helical segment.

This sequence belongs to the ATPase B chain family. In terms of assembly, F-type ATPases have 2 components, F(1) - the catalytic core - and F(0) - the membrane proton channel. F(1) has five subunits: alpha(3), beta(3), gamma(1), delta(1), epsilon(1). F(0) has three main subunits: a(1), b(2) and c(10-14). The alpha and beta chains form an alternating ring which encloses part of the gamma chain. F(1) is attached to F(0) by a central stalk formed by the gamma and epsilon chains, while a peripheral stalk is formed by the delta and b chains.

It is found in the cell membrane. In terms of biological role, f(1)F(0) ATP synthase produces ATP from ADP in the presence of a proton or sodium gradient. F-type ATPases consist of two structural domains, F(1) containing the extramembraneous catalytic core and F(0) containing the membrane proton channel, linked together by a central stalk and a peripheral stalk. During catalysis, ATP synthesis in the catalytic domain of F(1) is coupled via a rotary mechanism of the central stalk subunits to proton translocation. Functionally, component of the F(0) channel, it forms part of the peripheral stalk, linking F(1) to F(0). This chain is ATP synthase subunit b, found in Bacillus cereus (strain G9842).